The primary structure comprises 126 residues: MAIRIVGVDLPQNKRGEIALTYVYGIGRSSSAKILDKAGVDKDLKVKDWTDDQAAKIREIIGAEYKVEGDLRSEVQLNIKRLMDIGCYRGVRHRIGLPVRGQSTKNNARTRKGRKKTVANKKKATK.

Residues 98 to 126 are disordered; the sequence is PVRGQSTKNNARTRKGRKKTVANKKKATK. Positions 108-126 are enriched in basic residues; it reads ARTRKGRKKTVANKKKATK.

It belongs to the universal ribosomal protein uS13 family. In terms of assembly, part of the 30S ribosomal subunit. Forms a loose heterodimer with protein S19. Forms two bridges to the 50S subunit in the 70S ribosome.

Functionally, located at the top of the head of the 30S subunit, it contacts several helices of the 16S rRNA. In the 70S ribosome it contacts the 23S rRNA (bridge B1a) and protein L5 of the 50S subunit (bridge B1b), connecting the 2 subunits; these bridges are implicated in subunit movement. Contacts the tRNAs in the A and P-sites. The chain is Small ribosomal subunit protein uS13 from Bacteroides fragilis (strain ATCC 25285 / DSM 2151 / CCUG 4856 / JCM 11019 / LMG 10263 / NCTC 9343 / Onslow / VPI 2553 / EN-2).